A 939-amino-acid polypeptide reads, in one-letter code: Probable importin ECU10_0620 (939 aa).

The region spanning 23–90 (AEAMLMDLEK…VENILDLFLY (68 aa)) is the Importin N-terminal domain.

The protein belongs to the importin beta family.

The protein localises to the nucleus. The protein resides in the cytoplasm. Active in protein import into the nucleus. The protein is Probable importin ECU10_0620 of Encephalitozoon cuniculi (strain GB-M1) (Microsporidian parasite).